The following is a 267-amino-acid chain: 5'-nucleotidase SurE (267 aa).

4 residues coordinate a divalent metal cation: Asp-9, Asp-10, Ser-40, and Asn-97.

Belongs to the SurE nucleotidase family. It depends on a divalent metal cation as a cofactor.

Its subcellular location is the cytoplasm. It catalyses the reaction a ribonucleoside 5'-phosphate + H2O = a ribonucleoside + phosphate. In terms of biological role, nucleotidase that shows phosphatase activity on nucleoside 5'-monophosphates. This chain is 5'-nucleotidase SurE, found in Helicobacter pylori (strain Shi470).